The following is a 227-amino-acid chain: Probable cell wall protein PGA42 (227 aa).

An N-terminal signal peptide occupies residues methionine 1–alanine 16. Residue asparagine 192 is glycosylated (N-linked (GlcNAc...) asparagine). Serine 200 is lipidated: GPI-anchor amidated serine. The propeptide at glycine 201 to valine 227 is removed in mature form.

Belongs to the IHD1 family. Post-translationally, the GPI-anchor is attached to the protein in the endoplasmic reticulum and serves to target the protein to the cell surface. There, the glucosamine-inositol phospholipid moiety is cleaved off and the GPI-modified mannoprotein is covalently attached via its lipidless GPI glycan remnant to the 1,6-beta-glucan of the outer cell wall layer.

Its subcellular location is the secreted. The protein resides in the cell wall. It is found in the membrane. Functionally, probable GPI-anchored cell wall protein that may be involved in cell wall organization, hyphal growth, as well as in virulence. The polypeptide is Probable cell wall protein PGA42 (PGA42) (Candida albicans (strain SC5314 / ATCC MYA-2876) (Yeast)).